Here is a 435-residue protein sequence, read N- to C-terminus: Glutamyl-tRNA reductase (435 aa).

Residues T49 to R52, S109, E114 to Q116, and Q120 each bind substrate. C50 (nucleophile) is an active-site residue. G198–S203 is a binding site for NADP(+).

The protein belongs to the glutamyl-tRNA reductase family. As to quaternary structure, homodimer.

It carries out the reaction (S)-4-amino-5-oxopentanoate + tRNA(Glu) + NADP(+) = L-glutamyl-tRNA(Glu) + NADPH + H(+). Its pathway is porphyrin-containing compound metabolism; protoporphyrin-IX biosynthesis; 5-aminolevulinate from L-glutamyl-tRNA(Glu): step 1/2. The protein operates within porphyrin-containing compound metabolism; chlorophyll biosynthesis. Functionally, catalyzes the NADPH-dependent reduction of glutamyl-tRNA(Glu) to glutamate 1-semialdehyde (GSA). The protein is Glutamyl-tRNA reductase of Prochlorococcus marinus (strain MIT 9211).